The chain runs to 447 residues: UPF0210 protein lhv_0606 (447 aa).

This sequence belongs to the UPF0210 family. As to quaternary structure, homodimer.

The sequence is that of UPF0210 protein lhv_0606 from Lactobacillus helveticus (strain DPC 4571).